A 94-amino-acid polypeptide reads, in one-letter code: UPF0298 protein SEQ_1830 (94 aa).

This sequence belongs to the UPF0298 family.

The protein localises to the cytoplasm. The chain is UPF0298 protein SEQ_1830 from Streptococcus equi subsp. equi (strain 4047).